Reading from the N-terminus, the 77-residue chain is Large ribosomal subunit protein bL28 (77 aa).

Belongs to the bacterial ribosomal protein bL28 family.

In Cupriavidus necator (strain ATCC 17699 / DSM 428 / KCTC 22496 / NCIMB 10442 / H16 / Stanier 337) (Ralstonia eutropha), this protein is Large ribosomal subunit protein bL28.